Here is a 163-residue protein sequence, read N- to C-terminus: Bacterial microcompartment assembly protein PduM (163 aa).

The protein belongs to the PduM family. Interacts with shell protein PduK.

The protein resides in the bacterial microcompartment. It participates in polyol metabolism; 1,2-propanediol degradation. Functionally, plays an essential role in assembly and/or stability of the bacterial microcompartment (BMC) dedicated to 1,2-propanediol (1,2-PD) degradation. Overexpression impairs BMC formation. Its function is as follows. The 1,2-PD-specific bacterial microcompartment (BMC) concentrates low levels of 1,2-PD catabolic enzymes, concentrates volatile reaction intermediates thus enhancing pathway flux and keeps the level of toxic, mutagenic propionaldehyde low. The polypeptide is Bacterial microcompartment assembly protein PduM (Salmonella typhimurium (strain LT2 / SGSC1412 / ATCC 700720)).